Consider the following 305-residue polypeptide: GTPase Era (305 aa).

The Era-type G domain maps to 11–181; it reads RSGFISFVGR…LDVITRLLPE (171 aa). Positions 19 to 26 are G1; sequence GRPNTGKS. 19–26 lines the GTP pocket; sequence GRPNTGKS. A G2 region spans residues 45 to 49; the sequence is ETTRH. The interval 66-69 is G3; that stretch reads DTPG. GTP contacts are provided by residues 66 to 70 and 130 to 133; these read DTPGL and TKVD. A G4 region spans residues 130-133; that stretch reads TKVD. The G5 stretch occupies residues 160-162; that stretch reads VSA. The KH type-2 domain occupies 212 to 291; sequence LKDELPHSVA…YLDLRIKVLK (80 aa).

Belongs to the TRAFAC class TrmE-Era-EngA-EngB-Septin-like GTPase superfamily. Era GTPase family. As to quaternary structure, monomer.

The protein resides in the cytoplasm. Its subcellular location is the cell membrane. An essential GTPase that binds both GDP and GTP, with rapid nucleotide exchange. Plays a role in 16S rRNA processing and 30S ribosomal subunit biogenesis and possibly also in cell cycle regulation and energy metabolism. The sequence is that of GTPase Era from Corynebacterium diphtheriae (strain ATCC 700971 / NCTC 13129 / Biotype gravis).